We begin with the raw amino-acid sequence, 157 residues long: SsrA-binding protein (157 aa).

It belongs to the SmpB family.

It localises to the cytoplasm. Required for rescue of stalled ribosomes mediated by trans-translation. Binds to transfer-messenger RNA (tmRNA), required for stable association of tmRNA with ribosomes. tmRNA and SmpB together mimic tRNA shape, replacing the anticodon stem-loop with SmpB. tmRNA is encoded by the ssrA gene; the 2 termini fold to resemble tRNA(Ala) and it encodes a 'tag peptide', a short internal open reading frame. During trans-translation Ala-aminoacylated tmRNA acts like a tRNA, entering the A-site of stalled ribosomes, displacing the stalled mRNA. The ribosome then switches to translate the ORF on the tmRNA; the nascent peptide is terminated with the 'tag peptide' encoded by the tmRNA and targeted for degradation. The ribosome is freed to recommence translation, which seems to be the essential function of trans-translation. The protein is SsrA-binding protein of Aquifex aeolicus (strain VF5).